A 436-amino-acid polypeptide reads, in one-letter code: 2-aminohexano-6-lactam racemase (436 aa).

Pyridoxal 5'-phosphate is bound by residues 110–111 (GS), Tyr-137, and 238–241 (DEVK). Tyr-137 is an active-site residue. Lys-267 carries the post-translational modification N6-(pyridoxal phosphate)lysine. Pyridoxal 5'-phosphate is bound at residue Thr-295.

This sequence belongs to the class-III pyridoxal-phosphate-dependent aminotransferase family. In terms of assembly, monomer. It depends on pyridoxal 5'-phosphate as a cofactor.

It catalyses the reaction L-2-aminohexano-6-lactam = D-2-aminohexano-6-lactam. Its function is as follows. catalyzes the interconversion of L-alpha-amino-epsilon-caprolactam and D-alpha-amino-epsilon-caprolactam. The polypeptide is 2-aminohexano-6-lactam racemase (Achromobacter obae).